Here is a 437-residue protein sequence, read N- to C-terminus: Amino-acid acetyltransferase (437 aa).

One can recognise an N-acetyltransferase domain in the interval 289–429; it reads ENIRLATSFD…EHYNYQRMSK (141 aa).

The protein belongs to the acetyltransferase family. ArgA subfamily.

It localises to the cytoplasm. It catalyses the reaction L-glutamate + acetyl-CoA = N-acetyl-L-glutamate + CoA + H(+). Its pathway is amino-acid biosynthesis; L-arginine biosynthesis; N(2)-acetyl-L-ornithine from L-glutamate: step 1/4. The chain is Amino-acid acetyltransferase from Actinobacillus pleuropneumoniae serotype 3 (strain JL03).